The sequence spans 495 residues: Histidine--tRNA ligase (495 aa).

Belongs to the class-II aminoacyl-tRNA synthetase family. In terms of assembly, homodimer.

It localises to the cytoplasm. The catalysed reaction is tRNA(His) + L-histidine + ATP = L-histidyl-tRNA(His) + AMP + diphosphate + H(+). This is Histidine--tRNA ligase from Bartonella henselae (strain ATCC 49882 / DSM 28221 / CCUG 30454 / Houston 1) (Rochalimaea henselae).